The chain runs to 442 residues: Cell cycle checkpoint control protein RAD9B (442 aa).

Disordered regions lie at residues 370–392 (EVPE…TEDV) and 422–442 (QSLA…FSTF). Phosphoserine is present on S387.

Belongs to the rad9 family. Interacts with HUS1, HUS1B, RAD1, RAD9A and RAD17.

In Bos taurus (Bovine), this protein is Cell cycle checkpoint control protein RAD9B (RAD9B).